A 426-amino-acid chain; its full sequence is Glutamate-1-semialdehyde 2,1-aminomutase (426 aa).

An N6-(pyridoxal phosphate)lysine modification is found at K264.

Belongs to the class-III pyridoxal-phosphate-dependent aminotransferase family. HemL subfamily. The cofactor is pyridoxal 5'-phosphate.

It is found in the cytoplasm. The enzyme catalyses (S)-4-amino-5-oxopentanoate = 5-aminolevulinate. It participates in porphyrin-containing compound metabolism; protoporphyrin-IX biosynthesis; 5-aminolevulinate from L-glutamyl-tRNA(Glu): step 2/2. This chain is Glutamate-1-semialdehyde 2,1-aminomutase, found in Methanocella arvoryzae (strain DSM 22066 / NBRC 105507 / MRE50).